The following is a 500-amino-acid chain: UDP-N-acetylmuramoyl-L-alanyl-D-glutamate--2,6-diaminopimelate ligase (500 aa).

Ser-32 is a binding site for UDP-N-acetyl-alpha-D-muramoyl-L-alanyl-D-glutamate. Position 117 to 123 (117 to 123 (GTNGKTT)) interacts with ATP. UDP-N-acetyl-alpha-D-muramoyl-L-alanyl-D-glutamate is bound by residues 159–160 (TT), Ser-186, Gln-192, and Arg-194. Residue Lys-226 is modified to N6-carboxylysine. Residues Arg-395, 419–422 (DNPR), Gly-470, and Glu-474 each bind meso-2,6-diaminopimelate. A Meso-diaminopimelate recognition motif motif is present at residues 419-422 (DNPR).

The protein belongs to the MurCDEF family. MurE subfamily. Mg(2+) serves as cofactor. Carboxylation is probably crucial for Mg(2+) binding and, consequently, for the gamma-phosphate positioning of ATP.

It is found in the cytoplasm. The enzyme catalyses UDP-N-acetyl-alpha-D-muramoyl-L-alanyl-D-glutamate + meso-2,6-diaminopimelate + ATP = UDP-N-acetyl-alpha-D-muramoyl-L-alanyl-gamma-D-glutamyl-meso-2,6-diaminopimelate + ADP + phosphate + H(+). The protein operates within cell wall biogenesis; peptidoglycan biosynthesis. In terms of biological role, catalyzes the addition of meso-diaminopimelic acid to the nucleotide precursor UDP-N-acetylmuramoyl-L-alanyl-D-glutamate (UMAG) in the biosynthesis of bacterial cell-wall peptidoglycan. The chain is UDP-N-acetylmuramoyl-L-alanyl-D-glutamate--2,6-diaminopimelate ligase from Parasynechococcus marenigrum (strain WH8102).